Reading from the N-terminus, the 1534-residue chain is Activating signal cointegrator 1 complex subunit 3 (1534 aa).

The 185-residue stretch at 83–267 (ETAYNTNENL…FLHVNPFIGL (185 aa)) folds into the Helicase ATP-binding 1 domain. 96-103 (APTGAGKT) contributes to the ATP binding site. The short motif at 209–212 (DEVH) is the DEVH box element. The Helicase C-terminal 1 domain occupies 294–500 (QLHDMEEVCY…SLADNLNAEI (207 aa)). Positions 576–849 (STDLGRTASH…GSEAVCIINF (274 aa)) constitute an SEC63 1 domain. Positions 898-1073 (HTLYHTDTNV…WLGIGQVGLF (176 aa)) constitute a Helicase ATP-binding 2 domain. 911 to 918 (APTGSGKT) is a binding site for ATP. A DEIH box motif is present at residues 1015–1018 (DEIH). Residues 1106–1313 (PVFQAIRTHS…GTVTSKQDAM (208 aa)) form the Helicase C-terminal 2 domain. The SEC63 2 domain occupies 1374–1481 (PLTYGRISSY…TLPHIQKQEL (108 aa)).

This sequence belongs to the helicase family.

The protein localises to the nucleus. It localises to the nucleus speckle. Its subcellular location is the cytoplasm. The protein resides in the cytosol. It catalyses the reaction Couples ATP hydrolysis with the unwinding of duplex DNA by translocating in the 3'-5' direction.. The catalysed reaction is ATP + H2O = ADP + phosphate + H(+). Functionally, 3'-5' DNA helicase involved in repair of alkylated DNA. Promotes DNA unwinding to generate single-stranded substrate needed for alkbh3, enabling alkbh3 to process alkylated N3-methylcytosine (3mC) within double-stranded regions. Also involved in activation of the ribosome quality control (RQC) pathway, a pathway that degrades nascent peptide chains during problematic translation. Drives the splitting of stalled ribosomes. The polypeptide is Activating signal cointegrator 1 complex subunit 3 (ascc3) (Danio rerio (Zebrafish)).